A 386-amino-acid polypeptide reads, in one-letter code: Patatin-07 (386 aa).

The first 23 residues, 1–23, serve as a signal peptide directing secretion; that stretch reads MATTKSFLILFFMILATTSSTCA. Residues 32 to 229 form the PNPLA domain; the sequence is LSIDGGGIKG…TVADPALLSV (198 aa). A GXGXXG motif is present at residues 36–41; that stretch reads GGGIKG. Residues 75–79 carry the GXSXG motif; the sequence is GTSTG. S77 (nucleophile) is an active-site residue. N-linked (GlcNAc...) asparagine glycosylation is found at N115 and N202. The active-site Proton acceptor is D215. Positions 215-217 match the DGA/G motif; that stretch reads DGA.

The protein belongs to the patatin family. Tuber.

It localises to the vacuole. Probable lipolytic acyl hydrolase (LAH), an activity which is thought to be involved in the response of tubers to pathogens. This chain is Patatin-07, found in Solanum tuberosum (Potato).